We begin with the raw amino-acid sequence, 920 residues long: MGRSNSRSHSSRSKSRSQSSSRSRSRSHSRKKRYSSRSRSRTYSRSRSRDRMYSRDYRRDYRNNRGMRRPYGYRGRGRGYYQGGGGRYHRGGYRPVWNRRHSRSPRRGRSRSRSPKRRSVSSQRSRSRSRRSYRSSRSPRSSSSRSSSPYSKSPVSKRRGSQEKQTKKAEGEPQEESPLKSKSQEEPKDTFEHDPSESIDEFNKSSATSGDIWPGLSAYDNSPRSPHSPSPIATPPSQSSSCSDAPMLSTVHSAKNTPSQHSHSIQHSPERSGSGSVGNGSSRYSPSQNSPIHHIPSRRSPAKTIAPQNAPRDESRGRSSFYPDGGDQETAKTGKFLKRFTDEESRVFLLDRGNTRDKEASKEKGSEKGRAEGEWEDQEALDYFSDKESGKQKFNDSEGDDTEETEDYRQFRKSVLADQGKSFATASHRNTEEEGLKYKSKVSLKGNRESDGFREEKNYKLKETGYVVERPSTTKDKHKEEDKNSERITVKKETQSPEQVKSEKLKDLFDYSPPLHKNLDAREKSTFREESPLRIKMIASDSHRPEVKLKMAPVPLDDSNRPASLTKDRLLASTLVHSVKKEQEFRSIFDHIKLPQASKSTSESFIQHIVSLVHHVKEQYFKSAAMTLNERFTSYQKATEEHSTRQKSPEIHRRIDISPSTLRKHTRLAGEERVFKEENQKGDKKLRCDSADLRHDIDRRRKERSKERGDSKGSRESSGSRKQEKTPKDYKEYKSYKDDSKHKREQDHSRSSSSSASPSSPSSREEKESKKEREEEFKTHHEMKEYSGFAGVSRPRGTFFRIRGRGRARGVFAGTNTGPNNSNTTFQKRPKEEEWDPEYTPKSKKYFLHDDRDDGVDYWAKRGRGRGTFQRGRGRFNFKKSGSSPKWTHDKYQGDGIVEDEEETMENNEEKKDRRKEEKE.

A disordered region spans residues 1–437 (MGRSNSRSHS…HRNTEEEGLK (437 aa)). Positions 23–46 (SRSRSHSRKKRYSSRSRSRTYSRS) are enriched in basic residues. Residues 47–63 (RSRDRMYSRDYRRDYRN) show a composition bias toward basic and acidic residues. Residues 87–134 (RYHRGGYRPVWNRRHSRSPRRGRSRSRSPKRRSVSSQRSRSRSRRSYR) show a composition bias toward basic residues. Phosphoserine occurs at positions 102 and 104. Over residues 135 to 154 (SSRSPRSSSSRSSSPYSKSP) the composition is skewed to low complexity. At Lys-152 the chain carries N6-acetyllysine. Positions 160–196 (GSQEKQTKKAEGEPQEESPLKSKSQEEPKDTFEHDPS) are enriched in basic and acidic residues. Ser-177 and Ser-181 each carry phosphoserine. A Glycyl lysine isopeptide (Lys-Gly) (interchain with G-Cter in SUMO2) cross-link involves residue Lys-188. Ser-196 and Ser-198 each carry phosphoserine. Tyr-219 is subject to Phosphotyrosine. Ser-222, Ser-259, Ser-262, Ser-264, and Ser-268 each carry phosphoserine. Tyr-284 carries the phosphotyrosine modification. Phosphoserine occurs at positions 285, 290, 297, 300, and 315. At Lys-332 the chain carries N6-acetyllysine; alternate. Lys-332 is covalently cross-linked (Glycyl lysine isopeptide (Lys-Gly) (interchain with G-Cter in SUMO2); alternate). Arg-339 bears the Phosphoserine mark. A phosphothreonine mark is found at Thr-341 and Thr-355. Basic and acidic residues predominate over residues 353 to 373 (GNTRDKEASKEKGSEKGRAEG). Position 383 is a phosphotyrosine (Tyr-383). Residues 384 to 396 (FSDKESGKQKFND) are compositionally biased toward basic and acidic residues. 3 positions are modified to phosphoserine: Ser-385, Ser-389, and Ser-397. Over residues 397-406 (SEGDDTEETE) the composition is skewed to acidic residues. Thr-402 carries the post-translational modification Phosphothreonine. Lys-413 is covalently cross-linked (Glycyl lysine isopeptide (Lys-Gly) (interchain with G-Cter in SUMO2)). N6-acetyllysine; alternate is present on Lys-421. Lys-421 is covalently cross-linked (Glycyl lysine isopeptide (Lys-Gly) (interchain with G-Cter in SUMO2); alternate). Residues Ser-422 and Ser-427 each carry the phosphoserine modification. Position 431 is a phosphothreonine (Thr-431). At Lys-437 the chain carries N6-acetyllysine; alternate. Lys-437 participates in a covalent cross-link: Glycyl lysine isopeptide (Lys-Gly) (interchain with G-Cter in SUMO2); alternate. Ser-450 is subject to Phosphoserine. Residues Lys-457 and Lys-462 each participate in a glycyl lysine isopeptide (Lys-Gly) (interchain with G-Cter in SUMO2) cross-link. Positions 464-502 (TGYVVERPSTTKDKHKEEDKNSERITVKKETQSPEQVKS) are disordered. Phosphoserine is present on Ser-472. The span at 472-502 (STTKDKHKEEDKNSERITVKKETQSPEQVKS) shows a compositional bias: basic and acidic residues. Position 475 is an N6-acetyllysine (Lys-475). Glycyl lysine isopeptide (Lys-Gly) (interchain with G-Cter in SUMO2) cross-links involve residues Lys-491 and Lys-492. Thr-494 carries the post-translational modification Phosphothreonine. Position 496 is a phosphoserine (Ser-496). Residue Lys-501 forms a Glycyl lysine isopeptide (Lys-Gly) (interchain with G-Cter in SUMO2) linkage. Phosphoserine occurs at positions 502, 512, 525, and 531. Residues Lys-536, Lys-548, and Lys-550 each participate in a glycyl lysine isopeptide (Lys-Gly) (interchain with G-Cter in SUMO2) cross-link. 2 positions are modified to phosphoserine: Ser-559 and Ser-564. Thr-566 carries the phosphothreonine modification. Lys-567 participates in a covalent cross-link: Glycyl lysine isopeptide (Lys-Gly) (interchain with G-Cter in SUMO2). A Phosphoserine modification is found at Ser-578. Lys-580 participates in a covalent cross-link: Glycyl lysine isopeptide (Lys-Gly) (interchain with G-Cter in SUMO2); alternate. Lys-580 participates in a covalent cross-link: Glycyl lysine isopeptide (Lys-Gly) (interchain with G-Cter in SUMO1); alternate. Residues Lys-593, Lys-599, and Lys-622 each participate in a glycyl lysine isopeptide (Lys-Gly) (interchain with G-Cter in SUMO2) cross-link. The interval 637-796 (KATEEHSTRQ…SGFAGVSRPR (160 aa)) is disordered. A compositionally biased stretch (basic and acidic residues) spans 638–656 (ATEEHSTRQKSPEIHRRID). Residues Ser-648, Ser-658, and Ser-660 each carry the phosphoserine modification. At Thr-661 the chain carries Phosphothreonine. Over residues 668–750 (LAGEERVFKE…KHKREQDHSR (83 aa)) the composition is skewed to basic and acidic residues. Lys-676 is covalently cross-linked (Glycyl lysine isopeptide (Lys-Gly) (interchain with G-Cter in SUMO2)). Residues Ser-690 and Ser-760 each carry the phosphoserine modification. The span at 751 to 762 (SSSSSASPSSPS) shows a compositional bias: low complexity. A compositionally biased stretch (basic and acidic residues) spans 763–785 (SREEKESKKEREEEFKTHHEMKE). Residues Lys-778 and Lys-784 each participate in a glycyl lysine isopeptide (Lys-Gly) (interchain with G-Cter in SUMO2) cross-link. Arg-803 is modified (citrulline). The residue at position 809 (Arg-809) is an Omega-N-methylarginine. Low complexity predominate over residues 810 to 825 (GVFAGTNTGPNNSNTT). Disordered regions lie at residues 810 to 840 (GVFAGTNTGPNNSNTTFQKRPKEEEWDPEYT) and 862 to 920 (RGRG…EEKE). Lys-831 participates in a covalent cross-link: Glycyl lysine isopeptide (Lys-Gly) (interchain with G-Cter in SUMO2); alternate. A Glycyl lysine isopeptide (Lys-Gly) (interchain with G-Cter in SUMO1); alternate cross-link involves residue Lys-831. The segment covering 897-907 (IVEDEEETMEN) has biased composition (acidic residues). The segment covering 908-920 (NEEKKDRRKEEKE) has biased composition (basic and acidic residues). Lys-911 is covalently cross-linked (Glycyl lysine isopeptide (Lys-Gly) (interchain with G-Cter in SUMO2)).

The protein belongs to the BCLAF1/THRAP3 family. As to quaternary structure, interacts with Bcl-2 related proteins, EMD, with the adenovirus E1B 19 kDa protein and with DNA. Component of the SNARP complex which consists at least of SNIP1, SNW1, THRAP3, BCLAF1 and PNN. Component of a MACOM-like complex, named WTAP complex, composed of WTAP, ZC3H13, CBLL1, KIAA1429, RBM15, BCLAF1 and THRAP3. Citrullinated by PADI4. Ubiquitous.

Its subcellular location is the cytoplasm. It is found in the nucleus. The protein localises to the nucleus speckle. It localises to the nucleoplasm. Its function is as follows. Death-promoting transcriptional repressor. May be involved in cyclin-D1/CCND1 mRNA stability through the SNARP complex which associates with both the 3'end of the CCND1 gene and its mRNA. This Homo sapiens (Human) protein is Bcl-2-associated transcription factor 1 (BCLAF1).